We begin with the raw amino-acid sequence, 241 residues long: DnaA regulatory inactivator Hda (241 aa).

It belongs to the DnaA family. HdA subfamily. In terms of assembly, the active form seems to be an ADP-bound monomer. Forms the RIDA complex (regulatory inactivation of DnaA) of ATP-DnaA, ADP-Hda and the DNA-loaded beta sliding clamp (dnaN).

Functionally, mediates the interaction of DNA replication initiator protein DnaA with DNA polymerase subunit beta sliding clamp (dnaN). Stimulates hydrolysis of ATP-DnaA to ADP-DnaA, rendering DnaA inactive for reinitiation, a process called regulatory inhibition of DnaA or RIDA. This chain is DnaA regulatory inactivator Hda, found in Citrobacter koseri (strain ATCC BAA-895 / CDC 4225-83 / SGSC4696).